The primary structure comprises 463 residues: Tryprostatin B synthase (463 aa).

Brevianamide F contacts are provided by Met93 and Glu101. 3 residues coordinate dimethylallyl diphosphate: Arg112, Lys200, and Tyr202. Brevianamide F is bound at residue Tyr204. Dimethylallyl diphosphate contacts are provided by Lys293, Tyr295, Gln379, Tyr381, Tyr445, and Tyr449.

Belongs to the tryptophan dimethylallyltransferase family.

The catalysed reaction is brevianamide F + dimethylallyl diphosphate = tryprostatin B + diphosphate. Its pathway is mycotoxin biosynthesis. Functionally, brevianamide F prenyltransferase; part of the gene cluster that mediates the biosynthesis of fumitremorgins, indole alkaloids that carry not only intriguing chemical structures, but also interesting biological and pharmacological activities. The biosynthesis of fumitremorgin-type alkaloids begins by condensation of the two amino acids L-tryptophan and L-proline to brevianamide F, catalyzed by the non-ribosomal peptide synthetase ftmPS/ftmA. Brevianamide F is then prenylated by the prenyltransferase ftmPT1/ftmB in the presence of dimethylallyl diphosphate, resulting in the formation of tryprostatin B. The three cytochrome P450 monooxygenases, ftmP450-1/ftmC, ftmP450-2/ftmE and ftmP450-3/FtmG, are responsible for the conversion of tryprostatin B to 6-hydroxytryprostatin B, tryprostatin A to fumitremorgin C and fumitremorgin C to 12,13-dihydroxyfumitremorgin C, respectively. The putative methyltransferase ftmMT/ftmD is expected for the conversion of 6-hydroxytryprostatin B to tryprostatin A. FtmPT2/FtmH catalyzes the prenylation of 12,13-dihydroxyfumitre-morgin C in the presence of dimethylallyl diphosphate, resulting in the formation of fumitremorgin B. Fumitremorgin B is further converted to verruculogen by ftmOx1/ftmF via the insertion of an endoperoxide bond between the two prenyl moieties. Finally, verruculogen is further converted to fumitremorgin A by the verruculogen prenyltransferase ftmPT3. The sequence is that of Tryprostatin B synthase from Neosartorya fischeri (strain ATCC 1020 / DSM 3700 / CBS 544.65 / FGSC A1164 / JCM 1740 / NRRL 181 / WB 181) (Aspergillus fischerianus).